Consider the following 523-residue polypeptide: Cryptochrome DASH (523 aa).

One can recognise a Photolyase/cryptochrome alpha/beta domain in the interval 6–142 (RVIICLLRND…KYQTFWGSTL (137 aa)). Disordered regions lie at residues 174–211 (RPTFQMPDKLKPLPSGLEEGSVPSHEDFDQQDPLTDPR) and 486–523 (KPAGSWEKSARRGKGPSHTPKQHKNRGIDFYFSRNKDV). Basic residues predominate over residues 496–510 (RRGKGPSHTPKQHKN).

Belongs to the DNA photolyase class-1 family. The cofactor is FAD. (6R)-5,10-methylene-5,6,7,8-tetrahydrofolate serves as cofactor.

In terms of biological role, may have a photoreceptor function. Has weak cyclobutyl pyrimidine photolyase activity when expressed in E.coli and when tested in vitro. The chain is Cryptochrome DASH (cry-dash) from Xenopus laevis (African clawed frog).